Reading from the N-terminus, the 249-residue chain is MKIIFTKVLFDNYVWIMFNSSKDCIIIDPGESNSVIKKIKKLNLNPKIILLTHNHLDHIQGVKNLLYKYPEISIYGPLETQFCGTKNLIDNRNTIEILNTKFYIIPTPGHTNGHTAYYCPPFLFCGDSIFSGGCGRVKNGMMIKMYNSLRTISKLPNDTLIYCSHEYTRSNLEFFKKIFPKNLNILNYYNNIKKSKTQCTLPSTLKIEKKINPFLQLNNTNLRHQVKIHNDLSFSLNFFIYLRKIKDKS.

Residues His53, His55, Asp57, His58, His110, Asp127, and His165 each coordinate Zn(2+).

This sequence belongs to the metallo-beta-lactamase superfamily. Glyoxalase II family. In terms of assembly, monomer. It depends on Zn(2+) as a cofactor.

It catalyses the reaction an S-(2-hydroxyacyl)glutathione + H2O = a 2-hydroxy carboxylate + glutathione + H(+). It functions in the pathway secondary metabolite metabolism; methylglyoxal degradation; (R)-lactate from methylglyoxal: step 2/2. In terms of biological role, thiolesterase that catalyzes the hydrolysis of S-D-lactoyl-glutathione to form glutathione and D-lactic acid. The sequence is that of Hydroxyacylglutathione hydrolase from Buchnera aphidicola subsp. Baizongia pistaciae (strain Bp).